We begin with the raw amino-acid sequence, 501 residues long: Probable cytochrome P450 6a20 (501 aa).

Cys445 contributes to the heme binding site.

Belongs to the cytochrome P450 family. Heme is required as a cofactor.

The protein resides in the endoplasmic reticulum membrane. Its subcellular location is the microsome membrane. Functionally, may be involved in the metabolism of insect hormones and in the breakdown of synthetic insecticides. This Drosophila melanogaster (Fruit fly) protein is Probable cytochrome P450 6a20 (Cyp6a20).